The sequence spans 373 residues: Trifolitoxin-processing protein TfxB (373 aa).

It to E.coli McbC which is involved in the processing of microcin B17 (MCCB17).

The protein localises to the cytoplasm. Its function is as follows. The actions of the proteins TfxB, TfxD and TfxF are implicated in the processing of the inactive trifolitoxin (TfxA) precursor into the active peptide. The polypeptide is Trifolitoxin-processing protein TfxB (tfxB) (Rhizobium leguminosarum bv. trifolii).